Reading from the N-terminus, the 180-residue chain is Adenine phosphoribosyltransferase (180 aa).

At alanine 2 the chain carries N-acetylalanine. Residues serine 4, serine 15, and serine 30 each carry the phosphoserine modification. Residue tyrosine 60 is modified to Phosphotyrosine. The residue at position 66 (serine 66) is a Phosphoserine. N6-acetyllysine is present on lysine 114. A Phosphothreonine modification is found at threonine 135.

This sequence belongs to the purine/pyrimidine phosphoribosyltransferase family. Homodimer.

The protein localises to the cytoplasm. The catalysed reaction is AMP + diphosphate = 5-phospho-alpha-D-ribose 1-diphosphate + adenine. It functions in the pathway purine metabolism; AMP biosynthesis via salvage pathway; AMP from adenine: step 1/1. Functionally, catalyzes a salvage reaction resulting in the formation of AMP, that is energically less costly than de novo synthesis. This Homo sapiens (Human) protein is Adenine phosphoribosyltransferase.